The sequence spans 219 residues: Large ribosomal subunit protein uL3 (219 aa).

Residues 124–154 (FSGSIKRHNQSEGPKSHGSRYHRRPGSMGPI) are disordered.

It belongs to the universal ribosomal protein uL3 family. Part of the 50S ribosomal subunit. Forms a cluster with proteins L14 and L19.

One of the primary rRNA binding proteins, it binds directly near the 3'-end of the 23S rRNA, where it nucleates assembly of the 50S subunit. The chain is Large ribosomal subunit protein uL3 from Phytoplasma mali (strain AT).